The following is an 807-amino-acid chain: Anaphase-promoting complex subunit 4 (807 aa).

Y469 carries the post-translational modification Phosphotyrosine. The interval 755 to 788 is disordered; sequence DESSDDEEEAGGKPVKIKEEVLSESETEAHQDAA. Phosphoserine is present on residues S757 and S758. The span at 770–785 shows a compositional bias: basic and acidic residues; sequence KIKEEVLSESETEAHQ. K772 is covalently cross-linked (Glycyl lysine isopeptide (Lys-Gly) (interchain with G-Cter in SUMO2)). Residues S777 and S779 each carry the phosphoserine modification. Residue K797 forms a Glycyl lysine isopeptide (Lys-Gly) (interchain with G-Cter in SUMO2) linkage.

Belongs to the APC4 family. In terms of assembly, the mammalian APC/C is composed at least of 14 distinct subunits ANAPC1, ANAPC2, CDC27/APC3, ANAPC4, ANAPC5, CDC16/APC6, ANAPC7, CDC23/APC8, ANAPC10, ANAPC11, CDC26/APC12, ANAPC13, ANAPC15 and ANAPC16 that assemble into a complex of at least 19 chains with a combined molecular mass of around 1.2 MDa; APC/C interacts with FZR1 and FBXO5. In the context of the APC/C complex, directly interacts with UBE2S. Interacts with FBXO43.

It is found in the nucleus. Its pathway is protein modification; protein ubiquitination. Its function is as follows. Component of the anaphase promoting complex/cyclosome (APC/C), a cell cycle-regulated E3 ubiquitin ligase that controls progression through mitosis and the G1 phase of the cell cycle. The APC/C complex acts by mediating ubiquitination and subsequent degradation of target proteins: it mainly mediates the formation of 'Lys-11'-linked polyubiquitin chains and, to a lower extent, the formation of 'Lys-48'- and 'Lys-63'-linked polyubiquitin chains. The APC/C complex catalyzes assembly of branched 'Lys-11'-/'Lys-48'-linked branched ubiquitin chains on target proteins. This is Anaphase-promoting complex subunit 4 (Anapc4) from Mus musculus (Mouse).